Reading from the N-terminus, the 251-residue chain is DNA repair protein RecO (251 aa).

The protein belongs to the RecO family.

Functionally, involved in DNA repair and RecF pathway recombination. The protein is DNA repair protein RecO of Macrococcus caseolyticus (strain JCSC5402) (Macrococcoides caseolyticum).